A 369-amino-acid polypeptide reads, in one-letter code: sn-glycerol-3-phosphate import ATP-binding protein UgpC (369 aa).

The ABC transporter domain occupies 4–235; the sequence is LSLRNVQKTY…PASTFVAGFI (232 aa). An ATP-binding site is contributed by 37–44; sequence GPSGCGKS.

Belongs to the ABC transporter superfamily. sn-glycerol-3-phosphate importer (TC 3.A.1.1.3) family. As to quaternary structure, the complex is composed of two ATP-binding proteins (UgpC), two transmembrane proteins (UgpA and UgpE) and a solute-binding protein (UgpB).

The protein localises to the cell inner membrane. It catalyses the reaction sn-glycerol 3-phosphate(out) + ATP + H2O = sn-glycerol 3-phosphate(in) + ADP + phosphate + H(+). Functionally, part of the ABC transporter complex UgpBAEC involved in sn-glycerol-3-phosphate (G3P) import. Responsible for energy coupling to the transport system. The protein is sn-glycerol-3-phosphate import ATP-binding protein UgpC of Cupriavidus pinatubonensis (strain JMP 134 / LMG 1197) (Cupriavidus necator (strain JMP 134)).